We begin with the raw amino-acid sequence, 148 residues long: Large-conductance mechanosensitive channel (148 aa).

The next 2 helical transmembrane spans lie at 9-29 and 79-99; these read AFAV…GAAF and IQTV…VKAI.

This sequence belongs to the MscL family. In terms of assembly, homopentamer.

It localises to the cell inner membrane. Its function is as follows. Channel that opens in response to stretch forces in the membrane lipid bilayer. May participate in the regulation of osmotic pressure changes within the cell. This chain is Large-conductance mechanosensitive channel, found in Pseudomonas syringae pv. tomato (strain ATCC BAA-871 / DC3000).